Consider the following 335-residue polypeptide: Phosphate acyltransferase (335 aa).

The protein belongs to the PlsX family. As to quaternary structure, homodimer. Probably interacts with PlsY.

It localises to the cytoplasm. It carries out the reaction a fatty acyl-[ACP] + phosphate = an acyl phosphate + holo-[ACP]. It participates in lipid metabolism; phospholipid metabolism. Catalyzes the reversible formation of acyl-phosphate (acyl-PO(4)) from acyl-[acyl-carrier-protein] (acyl-ACP). This enzyme utilizes acyl-ACP as fatty acyl donor, but not acyl-CoA. This Streptococcus uberis (strain ATCC BAA-854 / 0140J) protein is Phosphate acyltransferase.